Consider the following 530-residue polypeptide: Autoinducer-2 kinase (530 aa).

This sequence belongs to the FGGY kinase family.

It is found in the cytoplasm. The catalysed reaction is (S)-4,5-dihydroxypentane-2,3-dione + ATP = (2S)-2-hydroxy-3,4-dioxopentyl phosphate + ADP + H(+). Its function is as follows. Catalyzes the phosphorylation of autoinducer-2 (AI-2) to phospho-AI-2, which subsequently inactivates the transcriptional regulator LsrR and leads to the transcription of the lsr operon. Phosphorylates the ring-open form of (S)-4,5-dihydroxypentane-2,3-dione (DPD), which is the precursor to all AI-2 signaling molecules, at the C5 position. The chain is Autoinducer-2 kinase from Enterobacter sp. (strain 638).